The sequence spans 166 residues: MAPKKAKKRAGGANSNVFSMFEQTQIQEFKEAFTIMDQNRDGFIDKNDLRDTFAALGRVNVKNEEIDEMIKEAPGPINFTVFLTMFGEKLKGADPEETILNAFKVFDPEGKGVLKADYVREMLTTQAERFSKEEVDQMFAAFPPDVTGNLDYKNLVHIITHGEEKD.

Position 2 is a n,N,N-trimethylalanine (Ala-2). Asn-14 carries the deamidated asparagine modification. Ser-15 carries the phosphoserine; by ZIPK/DAPK3 modification. Phosphoserine is present on Ser-19. EF-hand domains lie at 24–59 (TQIQ…LGRV), 94–129 (DPEE…QAER), and 130–165 (FSKE…GEEK). Ca(2+)-binding residues include Asp-37, Asn-39, Asp-41, and Asp-48. Thr-52 bears the Phosphothreonine mark.

As to quaternary structure, myosin is a hexamer of 2 heavy chains and 4 light chains. Interacts with MYOC. N-terminus is methylated by METTL11A/NTM1. Post-translationally, phosphorylated by MYLK3 and MYLK2; promotes cardiac muscle contraction and function. Dephosphorylated by PPP1CB complexed to PPP1R12B. The phosphorylated form in adult is expressed as gradients across the heart from endocardium (low phosphorylation) to epicardium (high phosphorylation); regulates cardiac torsion and workload distribution. Highly expressed in type I muscle fibers.

It is found in the cytoplasm. Its subcellular location is the myofibril. It localises to the sarcomere. The protein resides in the a band. In terms of biological role, contractile protein that plays a role in heart development and function. Following phosphorylation, plays a role in cross-bridge cycling kinetics and cardiac muscle contraction by increasing myosin lever arm stiffness and promoting myosin head diffusion; as a consequence of the increase in maximum contraction force and calcium sensitivity of contraction force. These events altogether slow down myosin kinetics and prolong duty cycle resulting in accumulated myosins being cooperatively recruited to actin binding sites to sustain thin filament activation as a means to fine-tune myofilament calcium sensitivity to force. During cardiogenesis plays an early role in cardiac contractility by promoting cardiac myofibril assembly. This is Myosin regulatory light chain 2, ventricular/cardiac muscle isoform from Homo sapiens (Human).